Reading from the N-terminus, the 136-residue chain is Large ribosomal subunit protein uL16c (136 aa).

Belongs to the universal ribosomal protein uL16 family. As to quaternary structure, part of the 50S ribosomal subunit.

The protein localises to the plastid. It is found in the chloroplast. The polypeptide is Large ribosomal subunit protein uL16c (Oryza nivara (Indian wild rice)).